Consider the following 912-residue polypeptide: Probable dipeptidyl-aminopeptidase B (912 aa).

Disordered regions lie at residues 1 to 30 and 48 to 68; these read MAAE…SNSL and NGST…DYSD. Residues 1 to 92 are Cytoplasmic-facing; that stretch reads MAAEKGGSSD…GGKPVQKKVK (92 aa). Basic and acidic residues-rich tracts occupy residues 7 to 25 and 54 to 67; these read GSSD…EYRD and TGPD…RDYS. The helical; Signal-anchor for type II membrane protein transmembrane segment at 93-113 threads the bilayer; sequence IVLGFLLFLCLSGWSLAFVLF. Over 114-912 the chain is Vacuolar; that stretch reads LFGGHESSKT…RAATWVGMSI (799 aa). 5 N-linked (GlcNAc...) asparagine glycosylation sites follow: Asn130, Asn210, Asn346, Asn569, and Asn656. Ser751 functions as the Charge relay system in the catalytic mechanism. An N-linked (GlcNAc...) asparagine glycan is attached at Asn810. Residues Asp828 and His861 each act as charge relay system in the active site. An N-linked (GlcNAc...) asparagine glycan is attached at Asn897.

It belongs to the peptidase S9B family.

Its subcellular location is the vacuole membrane. The enzyme catalyses Release of an N-terminal dipeptide, Xaa-Yaa-|-Zaa-, from a polypeptide, preferentially when Yaa is Pro, provided Zaa is neither Pro nor hydroxyproline.. Type IV dipeptidyl-peptidase which removes N-terminal dipeptides sequentially from polypeptides having unsubstituted N-termini provided that the penultimate residue is proline. The sequence is that of Probable dipeptidyl-aminopeptidase B (DAPB) from Paracoccidioides brasiliensis (strain Pb18).